Reading from the N-terminus, the 120-residue chain is Large ribosomal subunit protein uL18 (120 aa).

Belongs to the universal ribosomal protein uL18 family. Part of the 50S ribosomal subunit; part of the 5S rRNA/L5/L18/L25 subcomplex. Contacts the 5S and 23S rRNAs.

Its function is as follows. This is one of the proteins that bind and probably mediate the attachment of the 5S RNA into the large ribosomal subunit, where it forms part of the central protuberance. This Geobacillus kaustophilus (strain HTA426) protein is Large ribosomal subunit protein uL18.